We begin with the raw amino-acid sequence, 141 residues long: Nucleoside diphosphate kinase (141 aa).

The ATP site is built by Lys-11, Phe-59, Arg-87, Thr-93, Arg-104, and Asn-114. The Pros-phosphohistidine intermediate role is filled by His-117.

It belongs to the NDK family. As to quaternary structure, homotetramer. It depends on Mg(2+) as a cofactor.

Its subcellular location is the cytoplasm. The enzyme catalyses a 2'-deoxyribonucleoside 5'-diphosphate + ATP = a 2'-deoxyribonucleoside 5'-triphosphate + ADP. It catalyses the reaction a ribonucleoside 5'-diphosphate + ATP = a ribonucleoside 5'-triphosphate + ADP. Its function is as follows. Major role in the synthesis of nucleoside triphosphates other than ATP. The ATP gamma phosphate is transferred to the NDP beta phosphate via a ping-pong mechanism, using a phosphorylated active-site intermediate. This is Nucleoside diphosphate kinase from Mannheimia succiniciproducens (strain KCTC 0769BP / MBEL55E).